The chain runs to 155 residues: Ribosomal RNA large subunit methyltransferase H (155 aa).

Positions 72 and 104 each coordinate S-adenosyl-L-methionine.

It belongs to the RNA methyltransferase RlmH family. As to quaternary structure, homodimer.

The protein localises to the cytoplasm. It carries out the reaction pseudouridine(1915) in 23S rRNA + S-adenosyl-L-methionine = N(3)-methylpseudouridine(1915) in 23S rRNA + S-adenosyl-L-homocysteine + H(+). In terms of biological role, specifically methylates the pseudouridine at position 1915 (m3Psi1915) in 23S rRNA. The sequence is that of Ribosomal RNA large subunit methyltransferase H from Fusobacterium nucleatum subsp. nucleatum (strain ATCC 25586 / DSM 15643 / BCRC 10681 / CIP 101130 / JCM 8532 / KCTC 2640 / LMG 13131 / VPI 4355).